An 83-amino-acid polypeptide reads, in one-letter code: Phosphoribosylformylglycinamidine synthase subunit PurS (83 aa).

The protein belongs to the PurS family. Homodimer. Part of the FGAM synthase complex composed of 1 PurL, 1 PurQ and 2 PurS subunits.

It localises to the cytoplasm. It carries out the reaction N(2)-formyl-N(1)-(5-phospho-beta-D-ribosyl)glycinamide + L-glutamine + ATP + H2O = 2-formamido-N(1)-(5-O-phospho-beta-D-ribosyl)acetamidine + L-glutamate + ADP + phosphate + H(+). The protein operates within purine metabolism; IMP biosynthesis via de novo pathway; 5-amino-1-(5-phospho-D-ribosyl)imidazole from N(2)-formyl-N(1)-(5-phospho-D-ribosyl)glycinamide: step 1/2. Its function is as follows. Part of the phosphoribosylformylglycinamidine synthase complex involved in the purines biosynthetic pathway. Catalyzes the ATP-dependent conversion of formylglycinamide ribonucleotide (FGAR) and glutamine to yield formylglycinamidine ribonucleotide (FGAM) and glutamate. The FGAM synthase complex is composed of three subunits. PurQ produces an ammonia molecule by converting glutamine to glutamate. PurL transfers the ammonia molecule to FGAR to form FGAM in an ATP-dependent manner. PurS interacts with PurQ and PurL and is thought to assist in the transfer of the ammonia molecule from PurQ to PurL. This chain is Phosphoribosylformylglycinamidine synthase subunit PurS, found in Methanocaldococcus jannaschii (strain ATCC 43067 / DSM 2661 / JAL-1 / JCM 10045 / NBRC 100440) (Methanococcus jannaschii).